The following is an 80-amino-acid chain: Small ribosomal subunit protein bS18 (80 aa).

This sequence belongs to the bacterial ribosomal protein bS18 family. Part of the 30S ribosomal subunit. Forms a tight heterodimer with protein bS6.

Its function is as follows. Binds as a heterodimer with protein bS6 to the central domain of the 16S rRNA, where it helps stabilize the platform of the 30S subunit. This is Small ribosomal subunit protein bS18 from Staphylococcus carnosus (strain TM300).